The sequence spans 1487 residues: Murinoglobulin-1 (1487 aa).

A signal peptide spans 1-24 (MKKNREAQLCLFSALLAFLPFASL). Cysteines 48 and 86 form a disulfide. 2 N-linked (GlcNAc...) asparagine glycosylation sites follow: asparagine 55 and asparagine 247. Intrachain disulfides connect cysteine 251–cysteine 283 and cysteine 269–cysteine 295. 4 N-linked (GlcNAc...) asparagine glycosylation sites follow: asparagine 301, asparagine 321, asparagine 393, and asparagine 508. 3 disulfides stabilise this stretch: cysteine 468–cysteine 563, cysteine 595–cysteine 784, and cysteine 643–cysteine 689. Positions 686–745 (PTYCYEMNMVVLSAPAVESELSPRGGEFEMMPLGVNKSPLPKEPPRKDPPPKDPVIETIR) are bait region. Residues asparagine 760, asparagine 787, and asparagine 882 are each glycosylated (N-linked (GlcNAc...) asparagine). 4 disulfide bridges follow: cysteine 860/cysteine 896, cysteine 934/cysteine 1334, cysteine 1092/cysteine 1140, and cysteine 1365/cysteine 1480. Positions 985-988 (CGEQ) form a cross-link, isoglutamyl cysteine thioester (Cys-Gln). N-linked (GlcNAc...) asparagine glycosylation occurs at asparagine 1004. Residues asparagine 1153, asparagine 1324, and asparagine 1437 are each glycosylated (N-linked (GlcNAc...) asparagine).

This sequence belongs to the protease inhibitor I39 (alpha-2-macroglobulin) family. In terms of assembly, monomer. As to expression, plasma.

Its subcellular location is the secreted. A proteinase activates the inhibitor by specific proteolysis in the bait region, which, by an unknown mechanism leads to reaction at the cysteinyl-glutamyl internal thiol ester site and to a conformational change, whereby the proteinase is trapped and/or covalently bound to the inhibitor. While in the tetrameric proteinase inhibitors steric inhibition is sufficiently strong, monomeric forms need a covalent linkage between the activated glutamyl residue of the original thiol ester and a terminal amino group of a lysine or another nucleophilic group on the proteinase, for inhibition to be effective. The sequence is that of Murinoglobulin-1 from Rattus norvegicus (Rat).